The following is a 305-amino-acid chain: MKILMLCREPRLYSCQRLKQACQDRNIQLDILDPNRMLIKLAVIDAQMQAQLYYQAGEIYDKCRAEPSLLAEYDAVLPRFGVSSTMMGCRVLDYFAAKKVVILNNSTAFRLARDKWSSLQVLAAQHIPIPTSSFAGALFSTAAHISQHRIPLVIKTCSGSQGVGVMLSESKVHSVSLLQTLQQAKVDNLLQDFVVEARGQDIRAFVIGDRVVAAIERNGLENDFRANIHQGGSASVIQLNTAEQQLAVLAAKTIGLDVAGVDLIRSNKGLLVLEVNACPGLDGIEKASKLDIAGLIIDYLLAMKK.

The 183-residue stretch at 119 to 301 (LQVLAAQHIP…IAGLIIDYLL (183 aa)) folds into the ATP-grasp domain. Residues lysine 155, 192–193 (DF), aspartate 201, and 225–227 (RAN) each bind ATP. 3 residues coordinate Mg(2+): aspartate 262, glutamate 274, and asparagine 276. Aspartate 262, glutamate 274, and asparagine 276 together coordinate Mn(2+).

This sequence belongs to the RimK family. Requires Mg(2+) as cofactor. The cofactor is Mn(2+).

The sequence is that of Probable alpha-L-glutamate ligase from Haemophilus ducreyi (strain 35000HP / ATCC 700724).